Reading from the N-terminus, the 971-residue chain is Isoleucine--tRNA ligase (971 aa).

The 'HIGH' region motif lies at 60-70; it reads PYANGDLHIGH. Residue Glu-563 participates in L-isoleucyl-5'-AMP binding. Positions 604–608 match the 'KMSKS' region motif; it reads KMSKS. Lys-607 is a binding site for ATP. 4 residues coordinate Zn(2+): Cys-922, Cys-925, Cys-942, and Cys-945.

Belongs to the class-I aminoacyl-tRNA synthetase family. IleS type 1 subfamily. In terms of assembly, monomer. The cofactor is Zn(2+).

It is found in the cytoplasm. The enzyme catalyses tRNA(Ile) + L-isoleucine + ATP = L-isoleucyl-tRNA(Ile) + AMP + diphosphate. Catalyzes the attachment of isoleucine to tRNA(Ile). As IleRS can inadvertently accommodate and process structurally similar amino acids such as valine, to avoid such errors it has two additional distinct tRNA(Ile)-dependent editing activities. One activity is designated as 'pretransfer' editing and involves the hydrolysis of activated Val-AMP. The other activity is designated 'posttransfer' editing and involves deacylation of mischarged Val-tRNA(Ile). The chain is Isoleucine--tRNA ligase from Acaryochloris marina (strain MBIC 11017).